The chain runs to 399 residues: Beta sliding clamp (399 aa).

Belongs to the beta sliding clamp family. As to quaternary structure, forms a ring-shaped head-to-tail homodimer around DNA which binds and tethers DNA polymerases and other proteins to the DNA. The DNA replisome complex has a single clamp-loading complex (3 tau and 1 each of delta, delta', psi and chi subunits) which binds 3 Pol III cores (1 core on the leading strand and 2 on the lagging strand) each with a beta sliding clamp dimer. Additional proteins in the replisome are other copies of gamma, psi and chi, Ssb, DNA helicase and RNA primase.

Its subcellular location is the cytoplasm. Confers DNA tethering and processivity to DNA polymerases and other proteins. Acts as a clamp, forming a ring around DNA (a reaction catalyzed by the clamp-loading complex) which diffuses in an ATP-independent manner freely and bidirectionally along dsDNA. Initially characterized for its ability to contact the catalytic subunit of DNA polymerase III (Pol III), a complex, multichain enzyme responsible for most of the replicative synthesis in bacteria; Pol III exhibits 3'-5' exonuclease proofreading activity. The beta chain is required for initiation of replication as well as for processivity of DNA replication. The polypeptide is Beta sliding clamp (dnaN) (Mycolicibacterium paratuberculosis (strain ATCC BAA-968 / K-10) (Mycobacterium paratuberculosis)).